Here is a 259-residue protein sequence, read N- to C-terminus: 5'-nucleotidase SurE 1 (259 aa).

Asp16, Asp17, Ser48, and Asn101 together coordinate a divalent metal cation.

The protein belongs to the SurE nucleotidase family. Requires a divalent metal cation as cofactor.

The protein resides in the cytoplasm. The enzyme catalyses a ribonucleoside 5'-phosphate + H2O = a ribonucleoside + phosphate. Its function is as follows. Nucleotidase that shows phosphatase activity on nucleoside 5'-monophosphates. This chain is 5'-nucleotidase SurE 1, found in Burkholderia lata (strain ATCC 17760 / DSM 23089 / LMG 22485 / NCIMB 9086 / R18194 / 383).